Here is a 628-residue protein sequence, read N- to C-terminus: Chaperone protein HtpG (628 aa).

Residues 1–340 (MSTETLQKET…SADLPLNVSR (340 aa)) form an a; substrate-binding region. A b region spans residues 341–557 (EILQHSKDIE…EHDLSGNLER (217 aa)). The segment at 558-628 (LLKAAGQKTP…FVRRVNAMLA (71 aa)) is c.

It belongs to the heat shock protein 90 family. Homodimer.

It localises to the cytoplasm. Its function is as follows. Molecular chaperone. Has ATPase activity. The chain is Chaperone protein HtpG from Methylobacillus flagellatus (strain ATCC 51484 / DSM 6875 / VKM B-1610 / KT).